Reading from the N-terminus, the 1470-residue chain is Isonitrile lipopeptide synthase (1470 aa).

The tract at residues 584-603 (PEPESQEAARPTAPAPTAPA) is disordered. Residues 974 to 1049 (AHDSTLERTI…ELARFLKQQE (76 aa)) form the Carrier domain. Residue serine 1009 is modified to O-(pantetheine 4'-phosphoryl)serine. Low complexity predominate over residues 1049–1059 (EQQAHAQVQPR). The tract at residues 1049 to 1070 (EQQAHAQVQPRPAGPGLPPTLL) is disordered.

This sequence belongs to the ATP-dependent AMP-binding enzyme family. It depends on pantetheine 4'-phosphate as a cofactor.

The enzyme catalyses 2 a (3R)-3-isocyanyl-fatty acyl-[ACP] + L-lysine + ATP + 2 NADPH = an isonitrile lipopeptide + 2 holo-[ACP] + AMP + diphosphate + 2 NADP(+). The catalysed reaction is 2 (3R)-3-isocyanylbutanoyl-[ACP] + L-lysine + ATP + 2 NADPH = (2S)-2,6-bis[(3R)-3-isocyanobutanamido]hexan-1-ol + 2 holo-[ACP] + AMP + diphosphate + 2 NADP(+). Nonribosomal peptide synthetase (NRPS) involved in the biosynthesis of a unique class of isonitrile lipopeptides (INLPs). Catalyzes the final step in the pathway, i.e. the condensation of a (3R)-3-isocyanyl-fatty acyl-[ACP] to both amino groups of a lysine, producing isonitrile lipopeptides. Can use (3R)-3-isocyanylbutanoyl-[ACP] as substrate, leading to (2S)-2,6-bis[(3R)-3-isocyanobutanamido]hexan-1-ol. The chain is Isonitrile lipopeptide synthase from Streptomyces coeruleorubidus.